We begin with the raw amino-acid sequence, 88 residues long: Arminin 1a (88 aa).

A signal peptide spans 1 to 18 (MKTVLAFLFLPFIAFTHA). Positions 19–57 (ESYEDVKEEIKNEAEKEIFEDLEEESDALDSSVREFNDA) are excised as a propeptide. Residue V85 is modified to Valine amide.

This sequence belongs to the arminin family. In terms of tissue distribution, expressed in entodermal epithelium along the body column.

Its subcellular location is the secreted. It is found in the target cell membrane. In terms of biological role, antimicrobial peptide with a broad-spectrum antimicrobial activity. Shows very strong bactericidal activity against B.megaterium (MBC=0.1 uM), E.coli (MBC=0.2 uM), S.aureus (MBC=0.4 uM), methicillin-resistant S.aureus (MRSA) (MBC=0.4-0.8 uM), vancomycin-resistant enterococci (VRE) (E.faecalis (MBC=1.6 uM), and E.faecium (MBC=0.4-0.8 uM)), and extended-spectrum beta-lactamase (ESBL)-producing enterobacteriaceae strains (K.pneumoniae (MBC=0.4-0.8 uM), E.coli (MBC=0.2-0.4 uM)). Keeps its antibacterial activity under a wide range of salt concentrations that mimic physiological conditions of human blood, which is surprising, since Hydra is an obligate freshwater animal with nearly no salt tolerance. Does not affect red blood cells. This is Arminin 1a from Hydra vulgaris (Hydra).